The chain runs to 245 residues: Ribonuclease 3 (245 aa).

An RNase III domain is found at 24-146 (YTVFSQKLGY…IIGAIYLESG (123 aa)). Residue E59 coordinates Mg(2+). The active site involves D63. Positions 132 and 135 each coordinate Mg(2+). E135 is an active-site residue. The DRBM domain occupies 173 to 243 (DPKTLLQEYL…ARRAYKLAVV (71 aa)).

This sequence belongs to the ribonuclease III family. Homodimer. Mg(2+) is required as a cofactor.

It is found in the cytoplasm. The enzyme catalyses Endonucleolytic cleavage to 5'-phosphomonoester.. Digests double-stranded RNA. Involved in the processing of primary rRNA transcript to yield the immediate precursors to the large and small rRNAs (23S and 16S). Processes some mRNAs, and tRNAs when they are encoded in the rRNA operon. Processes pre-crRNA and tracrRNA of type II CRISPR loci if present in the organism. This is Ribonuclease 3 from Nitrosomonas eutropha (strain DSM 101675 / C91 / Nm57).